The chain runs to 684 residues: Glycine--tRNA ligase beta subunit (684 aa).

It belongs to the class-II aminoacyl-tRNA synthetase family. Tetramer of two alpha and two beta subunits.

Its subcellular location is the cytoplasm. It carries out the reaction tRNA(Gly) + glycine + ATP = glycyl-tRNA(Gly) + AMP + diphosphate. This is Glycine--tRNA ligase beta subunit from Pseudomonas syringae pv. syringae (strain B728a).